Here is a 78-residue protein sequence, read N- to C-terminus: Biotin synthase auxiliary protein (78 aa).

This sequence belongs to the BsaP family. Iron-sulfur cluster is required as a cofactor.

Its function is as follows. Required for the activity of the biotin synthase BioB. This chain is Biotin synthase auxiliary protein, found in Mycolicibacterium smegmatis (strain ATCC 700084 / mc(2)155) (Mycobacterium smegmatis).